Reading from the N-terminus, the 355-residue chain is Epoxide hydrolase 2 (355 aa).

Residues 78 to 323 enclose the AB hydrolase-1 domain; the sequence is VLLMVHGFPE…IRGASHWVQQ (246 aa). The Nucleophile role is filled by Asp-152. The Proton donor role is filled by Tyr-263. His-319 functions as the Proton acceptor in the catalytic mechanism.

It belongs to the AB hydrolase superfamily. Epoxide hydrolase family.

It carries out the reaction an epoxide + H2O = an ethanediol. It participates in lipid metabolism. Its function is as follows. Catalyzes the hydrolysis of epoxide-containing fatty acids. Active in vitro against trans-1,3-diphenylpropene oxide (t-DPPO), epoxyeicosatrienoic acids (EETs) including 8,9-EET, 11,12-EET and 14,15-EET and the linoleic acid metabolites 12,13-epoxy-9-octadecenoate (12,13-EpOME) and 9,10-epoxy-12-octadecenoate (9,10-EpOME). The chain is Epoxide hydrolase 2 from Caenorhabditis elegans.